A 217-amino-acid chain; its full sequence is Cytidylate kinase (217 aa).

ATP is bound at residue 21-29 (GPAASGKGT).

Belongs to the cytidylate kinase family. Type 1 subfamily.

Its subcellular location is the cytoplasm. It catalyses the reaction CMP + ATP = CDP + ADP. It carries out the reaction dCMP + ATP = dCDP + ADP. This Rickettsia bellii (strain OSU 85-389) protein is Cytidylate kinase.